Consider the following 518-residue polypeptide: D-aminopeptidase (518 aa).

The Nucleophile role is filled by Ser62. Lys65 functions as the Proton donor/acceptor in the catalytic mechanism. Residues 373–392 (FGTGPEKMDISGENEAQSSM) form a disordered region. The important for specificity stretch occupies residues 477 to 487 (QRSMDAPSPGE). Asp481 is a binding site for substrate.

This sequence belongs to the peptidase S12 family. Homodimer.

It carries out the reaction Release of an N-terminal D-amino acid from a peptide, Xaa-|-Yaa-, in which Xaa is preferably D-Ala, D-Ser or D-Thr. D-amino acid amides and methyl esters also are hydrolyzed, as is glycine amide.. Inhibited by beta-lactam compounds such as 6-aminopenicillic acid, 7-aminocephalosporanic acid, benzylpenicillin and ampicillin. Inhibited by p-chloromercuribenzoate. Hydrolyzes N-terminal residues in D-amino acid-containing peptides. The chain is D-aminopeptidase from Brucella melitensis biotype 2 (strain ATCC 23457).